The following is a 222-amino-acid chain: UPF0502 protein Shewmr4_1554 (222 aa).

Positions 175–193 (SLSADSPSAGSNSLNAQDR) are enriched in polar residues. Residues 175–194 (SLSADSPSAGSNSLNAQDRQ) form a disordered region.

This sequence belongs to the UPF0502 family.

The protein is UPF0502 protein Shewmr4_1554 of Shewanella sp. (strain MR-4).